The following is a 236-amino-acid chain: Ubiquinone biosynthesis O-methyltransferase (236 aa).

Residues Arg39, Gly59, Asp80, and Met124 each coordinate S-adenosyl-L-methionine.

This sequence belongs to the methyltransferase superfamily. UbiG/COQ3 family.

The enzyme catalyses a 3-demethylubiquinol + S-adenosyl-L-methionine = a ubiquinol + S-adenosyl-L-homocysteine + H(+). It catalyses the reaction a 3-(all-trans-polyprenyl)benzene-1,2-diol + S-adenosyl-L-methionine = a 2-methoxy-6-(all-trans-polyprenyl)phenol + S-adenosyl-L-homocysteine + H(+). It participates in cofactor biosynthesis; ubiquinone biosynthesis. Its function is as follows. O-methyltransferase that catalyzes the 2 O-methylation steps in the ubiquinone biosynthetic pathway. This chain is Ubiquinone biosynthesis O-methyltransferase, found in Shewanella baltica (strain OS223).